A 268-amino-acid chain; its full sequence is Adenosylcobinamide-GDP ribazoletransferase (268 aa).

A run of 8 helical transmembrane segments spans residues 1–21, 36–56, 59–79, 112–132, 138–158, 182–202, 212–232, and 244–264; these read MAGN…TLPV, YLFI…GTLF, ILPA…LTGI, AGGL…AMTF, WLFV…ITII, LAAV…AAII, IMAG…ILII, and VIGA…GAVL.

It belongs to the CobS family. It depends on Mg(2+) as a cofactor.

The protein localises to the cell membrane. It carries out the reaction alpha-ribazole + adenosylcob(III)inamide-GDP = adenosylcob(III)alamin + GMP + H(+). The catalysed reaction is alpha-ribazole 5'-phosphate + adenosylcob(III)inamide-GDP = adenosylcob(III)alamin 5'-phosphate + GMP + H(+). The protein operates within cofactor biosynthesis; adenosylcobalamin biosynthesis; adenosylcobalamin from cob(II)yrinate a,c-diamide: step 7/7. Functionally, joins adenosylcobinamide-GDP and alpha-ribazole to generate adenosylcobalamin (Ado-cobalamin). Also synthesizes adenosylcobalamin 5'-phosphate from adenosylcobinamide-GDP and alpha-ribazole 5'-phosphate. This is Adenosylcobinamide-GDP ribazoletransferase from Methanocella arvoryzae (strain DSM 22066 / NBRC 105507 / MRE50).